The chain runs to 398 residues: Elongation factor Tu (398 aa).

In terms of domain architecture, tr-type G spans Lys10–Glu207. Residues Gly19–Thr26 are G1. Gly19–Thr26 serves as a coordination point for GTP. Thr26 contributes to the Mg(2+) binding site. The G2 stretch occupies residues Gly63 to Asn67. The interval Asp84–Gly87 is G3. GTP contacts are provided by residues Asp84–His88 and Asn139–Asp142. The interval Asn139–Asp142 is G4. Positions Ser177–Leu179 are G5.

Belongs to the TRAFAC class translation factor GTPase superfamily. Classic translation factor GTPase family. EF-Tu/EF-1A subfamily. In terms of assembly, monomer.

The protein localises to the cytoplasm. The catalysed reaction is GTP + H2O = GDP + phosphate + H(+). GTP hydrolase that promotes the GTP-dependent binding of aminoacyl-tRNA to the A-site of ribosomes during protein biosynthesis. The protein is Elongation factor Tu of Streptococcus pyogenes serotype M1.